We begin with the raw amino-acid sequence, 206 residues long: MARYIGPKCKLARREGTDLFLKSGVRAIESKCNIEAAPGIHGQRRGRQSDYGTQLREKQKVRRIYGVLERQFSGYYKEAAGKKGATGENLLQLLECRLDNVVYRMGFGSTRAESRQLVSHKSVSVNGKTVNVPSYQVRAGDVVAIREKAKNQLRIVQALDLCAQRGRVEWVEVDTEKKSGVFKNVPARSDLSADINESLIVELYSK.

An S4 RNA-binding domain is found at 96–156; it reads CRLDNVVYRM…EKAKNQLRIV (61 aa).

The protein belongs to the universal ribosomal protein uS4 family. As to quaternary structure, part of the 30S ribosomal subunit. Contacts protein S5. The interaction surface between S4 and S5 is involved in control of translational fidelity.

In terms of biological role, one of the primary rRNA binding proteins, it binds directly to 16S rRNA where it nucleates assembly of the body of the 30S subunit. Its function is as follows. With S5 and S12 plays an important role in translational accuracy. The polypeptide is Small ribosomal subunit protein uS4 (Pseudomonas savastanoi pv. phaseolicola (strain 1448A / Race 6) (Pseudomonas syringae pv. phaseolicola (strain 1448A / Race 6))).